A 362-amino-acid chain; its full sequence is 3-dehydroquinate synthase (362 aa).

Residues 71-76, 105-109, 129-130, lysine 142, lysine 151, and 169-172 each bind NAD(+); these read DGEQYK, GVIGD, TT, and CLKT. Zn(2+) contacts are provided by glutamate 184, histidine 247, and histidine 264.

The protein belongs to the sugar phosphate cyclases superfamily. Dehydroquinate synthase family. Co(2+) serves as cofactor. Requires Zn(2+) as cofactor. It depends on NAD(+) as a cofactor.

The protein localises to the cytoplasm. The catalysed reaction is 7-phospho-2-dehydro-3-deoxy-D-arabino-heptonate = 3-dehydroquinate + phosphate. It participates in metabolic intermediate biosynthesis; chorismate biosynthesis; chorismate from D-erythrose 4-phosphate and phosphoenolpyruvate: step 2/7. Its function is as follows. Catalyzes the conversion of 3-deoxy-D-arabino-heptulosonate 7-phosphate (DAHP) to dehydroquinate (DHQ). This chain is 3-dehydroquinate synthase, found in Salmonella agona (strain SL483).